The sequence spans 430 residues: Adenylosuccinate synthetase (430 aa).

Residues 13–19 and 41–43 each bind GTP; these read GDEGKGK and GHT. The Proton acceptor role is filled by Asp-14. Mg(2+) contacts are provided by Asp-14 and Gly-41. IMP-binding positions include 14–17, 39–42, Thr-130, Arg-144, Gln-225, Thr-240, and Arg-304; these read DEGK and NAGH. His-42 (proton donor) is an active-site residue. Residue 300-306 coordinates substrate; the sequence is ATTGRKR. Residues Arg-306, 332-334, and 414-416 contribute to the GTP site; these read KLD and STG.

Belongs to the adenylosuccinate synthetase family. In terms of assembly, homodimer. Mg(2+) serves as cofactor.

It localises to the cytoplasm. It catalyses the reaction IMP + L-aspartate + GTP = N(6)-(1,2-dicarboxyethyl)-AMP + GDP + phosphate + 2 H(+). It participates in purine metabolism; AMP biosynthesis via de novo pathway; AMP from IMP: step 1/2. Its function is as follows. Plays an important role in the de novo pathway of purine nucleotide biosynthesis. Catalyzes the first committed step in the biosynthesis of AMP from IMP. The chain is Adenylosuccinate synthetase from Teredinibacter turnerae (strain ATCC 39867 / T7901).